The sequence spans 61 residues: Large ribosomal subunit protein uL29 (61 aa).

Belongs to the universal ribosomal protein uL29 family.

This Xanthomonas euvesicatoria pv. vesicatoria (strain 85-10) (Xanthomonas campestris pv. vesicatoria) protein is Large ribosomal subunit protein uL29.